The primary structure comprises 212 residues: Cytidylate kinase (212 aa).

7 to 15 (GPAASGKGT) contacts ATP.

It belongs to the cytidylate kinase family. Type 1 subfamily.

It localises to the cytoplasm. It catalyses the reaction CMP + ATP = CDP + ADP. The enzyme catalyses dCMP + ATP = dCDP + ADP. The polypeptide is Cytidylate kinase (Rhodopseudomonas palustris (strain BisB5)).